A 159-amino-acid polypeptide reads, in one-letter code: uncharacterized protein (159 aa).

2 disordered regions span residues 1-23 (MEQD…KGQA) and 91-110 (AGGG…GPAA).

This is an uncharacterized protein from Homo sapiens (Human).